Here is a 414-residue protein sequence, read N- to C-terminus: Na(+)-translocating NADH-quinone reductase subunit B (414 aa).

4 helical membrane-spanning segments follow: residues 23 to 40 (WFALYEAAATLFYTPGLV), 56 to 76 (IMIMVWFAVFPAMFWGMYNAG), 129 to 149 (FLPIYATVFLVGGFWEVLFCM), and 164 to 184 (ILFALIVPPTLPLWQAALGIT). Position 236 is an FMN phosphoryl threonine (threonine 236). The next 5 helical transmembrane spans lie at 268–288 (IPGSIGEVSTLALLIGAAMIV), 297–317 (IIAGVMIGMIVVSTLFNVIGS), 322–342 (MFSMPWHWHLVLGGFAFGMFF), 358–378 (WWYGILIGAMCVMIRVVNPAY), and 381–401 (GMMLAILFANLFAPLFDHLVV).

The protein belongs to the NqrB/RnfD family. Composed of six subunits; NqrA, NqrB, NqrC, NqrD, NqrE and NqrF. It depends on FMN as a cofactor.

The protein resides in the cell inner membrane. The enzyme catalyses a ubiquinone + n Na(+)(in) + NADH + H(+) = a ubiquinol + n Na(+)(out) + NAD(+). Its function is as follows. NQR complex catalyzes the reduction of ubiquinone-1 to ubiquinol by two successive reactions, coupled with the transport of Na(+) ions from the cytoplasm to the periplasm. NqrA to NqrE are probably involved in the second step, the conversion of ubisemiquinone to ubiquinol. This Vibrio vulnificus (strain CMCP6) protein is Na(+)-translocating NADH-quinone reductase subunit B.